A 173-amino-acid polypeptide reads, in one-letter code: Large ribosomal subunit protein uL10 (173 aa).

This sequence belongs to the universal ribosomal protein uL10 family. Part of the ribosomal stalk of the 50S ribosomal subunit. The N-terminus interacts with L11 and the large rRNA to form the base of the stalk. The C-terminus forms an elongated spine to which L12 dimers bind in a sequential fashion forming a multimeric L10(L12)X complex.

Functionally, forms part of the ribosomal stalk, playing a central role in the interaction of the ribosome with GTP-bound translation factors. This Cupriavidus pinatubonensis (strain JMP 134 / LMG 1197) (Cupriavidus necator (strain JMP 134)) protein is Large ribosomal subunit protein uL10.